Here is a 248-residue protein sequence, read N- to C-terminus: Adenylate kinase isoenzyme 6 homolog HBR1 (248 aa).

ATP is bound by residues Gly19, Gly21, Lys22, Ser23, and Ser24. The NMPbind stretch occupies residues 49–72 (NISEIAKERDCIESYDAKLDTSIV). The interval 124 to 134 (TRNYNDLKLQE) is LID. An ATP-binding site is contributed by Arg125. Residues 188-248 (DGVSNELNKQ…EMEHTEDIAQ (61 aa)) form a disordered region. Residues 202–238 (DSSDEGDDNSDSDEYELEEDEQEEEEEREEYDEETNE) show a composition bias toward acidic residues. Over residues 239-248 (EMEHTEDIAQ) the composition is skewed to basic and acidic residues.

It belongs to the adenylate kinase family. AK6 subfamily. Interacts with small ribosomal subunit protein uS11. Not a structural component of 43S pre-ribosomes, but transiently interacts with them by binding to uS11.

The protein localises to the cytoplasm. Its subcellular location is the nucleus. It catalyses the reaction AMP + ATP = 2 ADP. It carries out the reaction ATP + H2O = ADP + phosphate + H(+). Its function is as follows. Broad-specificity nucleoside monophosphate (NMP) kinase that catalyzes the reversible transfer of the terminal phosphate group between nucleoside triphosphates and monophosphates. Also has ATPase activity. Involved in the late cytoplasmic maturation steps of the 40S ribosomal particles, specifically 18S rRNA maturation. While NMP activity is not required for ribosome maturation, ATPase activity is. Associates transiently with small ribosomal subunit protein uS11. ATP hydrolysis breaks the interaction with uS11. May temporarily remove uS11 from the ribosome to enable a conformational change of the ribosomal RNA that is needed for the final maturation step of the small ribosomal subunit. Its NMP activity may have a role in nuclear energy homeostasis. Induces transcription of mating-type proteins ALPHA1 and ALPHA2 and moderately represses transcription of mating-type protein A1 in response to hemoglobin and growth signals. Involved in the induction of a high affinity fibronectin receptor by sub-inhibitory dosages of caspofungin. The protein is Adenylate kinase isoenzyme 6 homolog HBR1 (HBR1) of Candida albicans (strain SC5314 / ATCC MYA-2876) (Yeast).